The chain runs to 336 residues: HTH-type transcriptional repressor PurR (336 aa).

The HTH lacI-type domain occupies alanine 2–valine 56. Positions isoleucine 4–asparagine 23 form a DNA-binding region, H-T-H motif. The DNA-binding element occupies serine 48–valine 56. The hypoxanthine site is built by tyrosine 73, lysine 188, threonine 190, phenylalanine 219, and aspartate 273.

In terms of assembly, homodimer.

The protein operates within purine metabolism; purine nucleotide biosynthesis [regulation]. Its function is as follows. Is the main repressor of the genes involved in the de novo synthesis of purine nucleotides, regulating purB, purC, purEK, purF, purHD, purL, purMN and guaBA expression. PurR is allosterically activated to bind its cognate DNA by binding the purine corepressors, hypoxanthine or guanine, thereby effecting transcription repression. The polypeptide is HTH-type transcriptional repressor PurR (Haemophilus influenzae (strain 86-028NP)).